The primary structure comprises 658 residues: Threonine--tRNA ligase (658 aa).

One can recognise a TGS domain in the interval 1–61 (MIELVFPDGS…EKGGAFKILT (61 aa)). Residues 243–535 (DHRKLGRQMD…LIENYAGAFP (293 aa)) are catalytic. Zn(2+)-binding residues include C335, H386, and H512.

It belongs to the class-II aminoacyl-tRNA synthetase family. As to quaternary structure, homodimer. Zn(2+) is required as a cofactor.

Its subcellular location is the cytoplasm. The catalysed reaction is tRNA(Thr) + L-threonine + ATP = L-threonyl-tRNA(Thr) + AMP + diphosphate + H(+). In terms of biological role, catalyzes the attachment of threonine to tRNA(Thr) in a two-step reaction: L-threonine is first activated by ATP to form Thr-AMP and then transferred to the acceptor end of tRNA(Thr). Also edits incorrectly charged L-seryl-tRNA(Thr). This is Threonine--tRNA ligase from Phenylobacterium zucineum (strain HLK1).